The chain runs to 603 residues: NADH-ubiquinone oxidoreductase chain 5 (603 aa).

16 helical membrane-spanning segments follow: residues Phe4 to Ile24, Thr38 to Gly58, Phe89 to Ala109, Leu122 to Ile142, Ala171 to Leu191, Leu211 to Leu233, Thr241 to Ile261, Ile273 to Leu293, Ile301 to Asn320, Ala325 to Ile347, Met366 to Leu386, Asn405 to Thr424, Leu457 to Leu477, Leu488 to Ala508, Ile537 to Trp557, and Gly582 to Ile602.

This sequence belongs to the complex I subunit 5 family. In terms of assembly, core subunit of respiratory chain NADH dehydrogenase (Complex I) which is composed of 45 different subunits.

It localises to the mitochondrion inner membrane. The enzyme catalyses a ubiquinone + NADH + 5 H(+)(in) = a ubiquinol + NAD(+) + 4 H(+)(out). Core subunit of the mitochondrial membrane respiratory chain NADH dehydrogenase (Complex I) which catalyzes electron transfer from NADH through the respiratory chain, using ubiquinone as an electron acceptor. Essential for the catalytic activity and assembly of complex I. The polypeptide is NADH-ubiquinone oxidoreductase chain 5 (MT-ND5) (Pongo pygmaeus (Bornean orangutan)).